Reading from the N-terminus, the 293-residue chain is 4-diphosphocytidyl-2-C-methyl-D-erythritol kinase (293 aa).

Lysine 10 is an active-site residue. Residue 96–106 participates in ATP binding; that stretch reads PIAAGLGGGSS. Aspartate 138 is an active-site residue.

This sequence belongs to the GHMP kinase family. IspE subfamily.

It carries out the reaction 4-CDP-2-C-methyl-D-erythritol + ATP = 4-CDP-2-C-methyl-D-erythritol 2-phosphate + ADP + H(+). It participates in isoprenoid biosynthesis; isopentenyl diphosphate biosynthesis via DXP pathway; isopentenyl diphosphate from 1-deoxy-D-xylulose 5-phosphate: step 3/6. In terms of biological role, catalyzes the phosphorylation of the position 2 hydroxy group of 4-diphosphocytidyl-2C-methyl-D-erythritol. The protein is 4-diphosphocytidyl-2-C-methyl-D-erythritol kinase of Caulobacter sp. (strain K31).